The chain runs to 129 residues: Copper chaperone GriE (129 aa).

The tat-type signal signal peptide spans 1–37 (MPMNRREMVMATTGAALAAAAAVPLLSGGEGEGAAEA). Residues 32–51 (EGAAEAAAAPAKATGRGREH) form a disordered region. The span at 34 to 45 (AAEAAAAPAKAT) shows a compositional bias: low complexity.

This sequence belongs to the melC1 family. In terms of processing, predicted to be exported by the Tat system. The position of the signal peptide cleavage has not been experimentally proven.

Functionally, involved in the transfer of Cu(2+) ions to the apo form of o-aminophenol oxidase GriF in the grixazone biosynthetic pathway. The chain is Copper chaperone GriE (griE) from Streptomyces griseus subsp. griseus (strain JCM 4626 / CBS 651.72 / NBRC 13350 / KCC S-0626 / ISP 5235).